The sequence spans 715 residues: Palmitoyltransferase ZDHHC5 (715 aa).

Topologically, residues 1 to 13 (MPAESGKRFKPSK) are cytoplasmic. The chain crosses the membrane as a helical span at residues 14 to 34 (YVPVSAAAIFLVGATTLFFAF). At 35-38 (TCPG) the chain is on the extracellular side. The helical transmembrane segment at 39–59 (LSLYVSPAVPIYNAIMFLFVL) threads the bilayer. Topologically, residues 60-148 (ANFSMATFMD…NCIGRRNYRY (89 aa)) are cytoplasmic. Tyrosine 91 carries the phosphotyrosine; by LYN modification. The DHHC domain maps to 104 to 154 (KWCATCRFYRPPRCSHCSVCDNCVEEFDHHCPWVNNCIGRRNYRYFFLFLL). The active-site S-palmitoyl cysteine intermediate is the cysteine 134. The chain crosses the membrane as a helical span at residues 149-169 (FFLFLLSLTAHIMGVFGFGLL). Residues 170-191 (YVLYHIEELSGVRTAVTMAVMC) are Extracellular-facing. The chain crosses the membrane as a helical span at residues 192–212 (VAGLFFIPVAGLTGFHVVLVA). The Cytoplasmic portion of the chain corresponds to 213-715 (RGRTTNEQVT…VGGTTYEISV (503 aa)). Phosphoserine is present on serine 247. Positions 289-715 (GELRRTKSKG…VGGTTYEISV (427 aa)) are disordered. Phosphothreonine is present on threonine 294. 2 positions are modified to phosphoserine: serine 296 and serine 299. Threonine 303 bears the Phosphothreonine mark. At serine 345 the chain carries Phosphoserine. Threonine 348 and threonine 350 each carry phosphothreonine. The segment covering 359 to 373 (SSSSTSAAMPHSSSA) has biased composition (low complexity). Phosphoserine is present on residues serine 380, serine 398, serine 406, and serine 409. The residue at position 411 (threonine 411) is a Phosphothreonine. Phosphoserine is present on residues serine 415, serine 425, serine 429, and serine 432. A compositionally biased stretch (low complexity) spans 422–432 (SSGSRSSSLKS). Position 436 is a phosphothreonine (threonine 436). Positions 442–478 (QLQSIRSEGTTSTSYKSLANQTRNGSLSYDSLLTPSD) are enriched in polar residues. Serine 529 bears the Phosphoserine mark. Phosphotyrosine; by FYN is present on tyrosine 533. At serine 554 the chain carries Phosphoserine. The residue at position 617 (arginine 617) is an Omega-N-methylarginine. Serine 621 carries the phosphoserine modification. At threonine 659 the chain carries Phosphothreonine. A compositionally biased stretch (polar residues) spans 666-677 (LKTTYSKSNGQP). Serine 684 and serine 694 each carry phosphoserine. Arginine 697 carries the post-translational modification Omega-N-methylarginine.

Belongs to the DHHC palmitoyltransferase family. ERF2/ZDHHC9 subfamily. In terms of processing, phosphorylation regulates association with endocytic proteins and its subcellular localization. Phosphorylation by LYN during fatty acid uptake leads to inactivation of the activity. Post-translationally, autopalmitoylated. Palmitoylation of the C-terminal tail regulates stimulation-dependent plasma membrane motility.

It localises to the cell membrane. Its subcellular location is the synapse. It catalyses the reaction L-cysteinyl-[protein] + hexadecanoyl-CoA = S-hexadecanoyl-L-cysteinyl-[protein] + CoA. Its function is as follows. Palmitoyltransferase that catalyzes the addition of palmitate onto various protein substrates such as CTNND2, CD36, GSDMD, NLRP3, NOD1, NOD2, STAT3 and S1PR1 thus plays a role in various biological processes including cell adhesion, inflammation, fatty acid uptake, bacterial sensing or cardiac functions. Plays an important role in the regulation of synapse efficacy by mediating palmitoylation of delta-catenin/CTNND2, thereby increasing synaptic delivery and surface stabilization of alpha-amino-3-hydroxy-5-methyl-4-isoxazole propionic acid receptors (AMPARs). Under basal conditions, remains at the synaptic membrane through FYN-mediated phosphorylation that prevents association with endocytic proteins. Neuronal activity enhances the internalization and trafficking of DHHC5 from spines to dendritic shafts where it palmitoylates delta-catenin/CTNND2. Regulates cell adhesion at the plasma membrane by palmitoylating GOLGA7B and DSG2. Plays a role in innate immune response by mediating the palmitoylation of NOD1 and NOD2 and their proper recruitment to the bacterial entry site and phagosomes. Also participates in fatty acid uptake by palmitoylating CD36 and thereby targeting it to the plasma membrane. Upon binding of fatty acids to CD36, gets phosphorylated by LYN leading to inactivation and subsequent CD36 caveolar endocytosis. Controls oligodendrocyte development by catalyzing STAT3 palmitoylation. Acts as a regulator of inflammatory response by mediating palmitoylation of NLRP3 and GSDMD. Palmitoylates NLRP3 to promote inflammasome assembly and activation. Activates pyroptosis by catalyzing palmitoylation of gasdermin-D (GSDMD), thereby promoting membrane translocation and pore formation of GSDMD. The chain is Palmitoyltransferase ZDHHC5 from Homo sapiens (Human).